The following is a 595-amino-acid chain: Elongation factor 4 (595 aa).

Positions lysine 2 to alanine 183 constitute a tr-type G domain. Residues aspartate 14–threonine 19 and asparagine 130–aspartate 133 contribute to the GTP site.

It belongs to the TRAFAC class translation factor GTPase superfamily. Classic translation factor GTPase family. LepA subfamily.

It localises to the cell inner membrane. It carries out the reaction GTP + H2O = GDP + phosphate + H(+). In terms of biological role, required for accurate and efficient protein synthesis under certain stress conditions. May act as a fidelity factor of the translation reaction, by catalyzing a one-codon backward translocation of tRNAs on improperly translocated ribosomes. Back-translocation proceeds from a post-translocation (POST) complex to a pre-translocation (PRE) complex, thus giving elongation factor G a second chance to translocate the tRNAs correctly. Binds to ribosomes in a GTP-dependent manner. This is Elongation factor 4 from Porphyromonas gingivalis (strain ATCC 33277 / DSM 20709 / CIP 103683 / JCM 12257 / NCTC 11834 / 2561).